The primary structure comprises 257 residues: MADS-box transcription factor 1 (257 aa).

Residues 1 to 61 (MGRGKVELKR…GRLFEFSSSS (61 aa)) form the MADS-box domain. The K-box domain maps to 85–175 (NEINYQEYLK…RKKLQETSAE (91 aa)).

May interact with the K-box of MADS6, MADS14 and MADS15.

It is found in the nucleus. Its function is as follows. Probable transcription factor involved in the development of floral organs. Required for the formation of inner floral organs (lodicules, stamens and carpels, or whorls 2, 3 and 4) and the lemma and palea (whorl 1), which are grass floral organs analogous to sepals. May be involved in the control of flowering time. Seems to act as transcriptional activator. May act upstream of the auxin-responsive protein GH3.8. The protein is MADS-box transcription factor 1 (MADS1) of Oryza sativa subsp. indica (Rice).